Here is a 311-residue protein sequence, read N- to C-terminus: Pyrimidine-specific ribonucleoside hydrolase RihA (311 aa).

Residue His240 is part of the active site.

This sequence belongs to the IUNH family. RihA subfamily.

Functionally, hydrolyzes cytidine or uridine to ribose and cytosine or uracil, respectively. This Shigella boydii serotype 4 (strain Sb227) protein is Pyrimidine-specific ribonucleoside hydrolase RihA.